Reading from the N-terminus, the 485-residue chain is UDP-N-acetylmuramoyl-L-alanyl-D-glutamate--2,6-diaminopimelate ligase (485 aa).

Ser30 contacts UDP-N-acetyl-alpha-D-muramoyl-L-alanyl-D-glutamate. 113–119 (GTNGKTT) is an ATP binding site. UDP-N-acetyl-alpha-D-muramoyl-L-alanyl-D-glutamate-binding positions include 155–156 (TT), Ser182, and Arg190. An N6-carboxylysine modification is found at Lys222. Residues Arg381, 405–408 (DNPR), Gly455, and Glu459 each bind meso-2,6-diaminopimelate. The Meso-diaminopimelate recognition motif motif lies at 405 to 408 (DNPR).

This sequence belongs to the MurCDEF family. MurE subfamily. It depends on Mg(2+) as a cofactor. Post-translationally, carboxylation is probably crucial for Mg(2+) binding and, consequently, for the gamma-phosphate positioning of ATP.

Its subcellular location is the cytoplasm. It carries out the reaction UDP-N-acetyl-alpha-D-muramoyl-L-alanyl-D-glutamate + meso-2,6-diaminopimelate + ATP = UDP-N-acetyl-alpha-D-muramoyl-L-alanyl-gamma-D-glutamyl-meso-2,6-diaminopimelate + ADP + phosphate + H(+). It functions in the pathway cell wall biogenesis; peptidoglycan biosynthesis. Its function is as follows. Catalyzes the addition of meso-diaminopimelic acid to the nucleotide precursor UDP-N-acetylmuramoyl-L-alanyl-D-glutamate (UMAG) in the biosynthesis of bacterial cell-wall peptidoglycan. The polypeptide is UDP-N-acetylmuramoyl-L-alanyl-D-glutamate--2,6-diaminopimelate ligase (Clostridium tetani (strain Massachusetts / E88)).